Reading from the N-terminus, the 498-residue chain is Probable malate:quinone oxidoreductase (498 aa).

This sequence belongs to the MQO family. FAD serves as cofactor.

It catalyses the reaction (S)-malate + a quinone = a quinol + oxaloacetate. The protein operates within carbohydrate metabolism; tricarboxylic acid cycle; oxaloacetate from (S)-malate (quinone route): step 1/1. The polypeptide is Probable malate:quinone oxidoreductase (Prochlorococcus marinus (strain AS9601)).